Reading from the N-terminus, the 245-residue chain is 2,3-bisphosphoglycerate-dependent phosphoglycerate mutase (245 aa).

Substrate contacts are provided by residues R9–N16, T22–G23, R61, E88–Y91, K99, R115–R116, and G181–N182. The active-site Tele-phosphohistidine intermediate is the H10. E88 serves as the catalytic Proton donor/acceptor.

Belongs to the phosphoglycerate mutase family. BPG-dependent PGAM subfamily.

It catalyses the reaction (2R)-2-phosphoglycerate = (2R)-3-phosphoglycerate. It participates in carbohydrate degradation; glycolysis; pyruvate from D-glyceraldehyde 3-phosphate: step 3/5. Its function is as follows. Catalyzes the interconversion of 2-phosphoglycerate and 3-phosphoglycerate. This Nocardia farcinica (strain IFM 10152) protein is 2,3-bisphosphoglycerate-dependent phosphoglycerate mutase.